A 185-amino-acid polypeptide reads, in one-letter code: Protein GrpE (185 aa).

Positions 1–11 (MENTQENPTDQ) are enriched in polar residues. Positions 1–38 (MENTQENPTDQTTEETGREAQAAEPAAQAAENAAPAAE) are disordered. Residues 19–38 (EAQAAEPAAQAAENAAPAAE) show a composition bias toward low complexity.

It belongs to the GrpE family. In terms of assembly, homodimer.

It localises to the cytoplasm. Its function is as follows. Participates actively in the response to hyperosmotic and heat shock by preventing the aggregation of stress-denatured proteins, in association with DnaK and GrpE. It is the nucleotide exchange factor for DnaK and may function as a thermosensor. Unfolded proteins bind initially to DnaJ; upon interaction with the DnaJ-bound protein, DnaK hydrolyzes its bound ATP, resulting in the formation of a stable complex. GrpE releases ADP from DnaK; ATP binding to DnaK triggers the release of the substrate protein, thus completing the reaction cycle. Several rounds of ATP-dependent interactions between DnaJ, DnaK and GrpE are required for fully efficient folding. This Burkholderia mallei (strain NCTC 10247) protein is Protein GrpE.